Reading from the N-terminus, the 318-residue chain is HPr kinase/phosphorylase (318 aa).

Residues H143 and K164 contribute to the active site. 158 to 165 (GKSGVGKS) is a binding site for ATP. S165 contributes to the Mg(2+) binding site. D182 (proton acceptor; for phosphorylation activity. Proton donor; for dephosphorylation activity) is an active-site residue. The interval 206–215 (MEIRGLGILN) is important for the catalytic mechanism of both phosphorylation and dephosphorylation. Residue E207 coordinates Mg(2+). R248 is a catalytic residue. The important for the catalytic mechanism of dephosphorylation stretch occupies residues 269-274 (PVKPGR).

Belongs to the HPrK/P family. In terms of assembly, homohexamer. Requires Mg(2+) as cofactor.

The enzyme catalyses [HPr protein]-L-serine + ATP = [HPr protein]-O-phospho-L-serine + ADP + H(+). The catalysed reaction is [HPr protein]-O-phospho-L-serine + phosphate + H(+) = [HPr protein]-L-serine + diphosphate. Catalyzes the ATP- as well as the pyrophosphate-dependent phosphorylation of a specific serine residue in HPr, a phosphocarrier protein of the phosphoenolpyruvate-dependent sugar phosphotransferase system (PTS). HprK/P also catalyzes the pyrophosphate-producing, inorganic phosphate-dependent dephosphorylation (phosphorolysis) of seryl-phosphorylated HPr (P-Ser-HPr). This chain is HPr kinase/phosphorylase, found in Leptospira borgpetersenii serovar Hardjo-bovis (strain JB197).